The following is a 1025-amino-acid chain: Interferon-induced helicase C domain-containing protein 1 (1025 aa).

CARD domains lie at 7-97 (AEDS…YVKP) and 110-190 (AHDE…QTGN). Glycyl lysine isopeptide (Lys-Gly) (interchain with G-Cter in ISG15) cross-links involve residues K23 and K43. The interval 273–297 (SLGHNSNMGRDSGTMGSDSDESVIQ) is disordered. A compositionally biased stretch (polar residues) spans 275 to 297 (GHNSNMGRDSGTMGSDSDESVIQ). 3 positions are modified to phosphoserine: S289, S291, and S302. Positions 317–510 (AQPALDGKNI…SEAEKHILNI (194 aa)) constitute a Helicase ATP-binding domain. A phosphoserine mark is found at S645 and S648. Residues 700-872 (KLIKLRNTIL…NMKPEEYAHK (173 aa)) enclose the Helicase C-terminal domain. A Phosphoserine; by RIOK3 modification is found at S828. The RLR CTR domain occupies 893-1020 (AKQYNDNPSL…PDLDYSEYCL (128 aa)). 4 residues coordinate Zn(2+): C907, C910, C962, and C964.

This sequence belongs to the helicase family. RLR subfamily. In terms of assembly, monomer in the absence of ligands and homodimerizes in the presence of dsRNA ligands. Can assemble into helical or linear polymeric filaments on long dsRNA. Interacts with MAVS/IPS1. Interacts (via the CARD domains) with TKFC, the interaction is inhibited by viral infection. Interacts with PCBP2. Interacts with NLRC5. Interacts with PIAS2-beta. Interacts with DDX60. Interacts with ANKRD17. Interacts with IKBKE. Interacts with ATG5 and ATG12, either as ATG5 and ATG12 monomers or as ATG12-ATG5 conjugates. Interacts with ZCCHC3; leading to activate IFIH1/MDA5. Interacts with RNF123. Interacts with DDX3X. Interacts with NOD1; this interaction promotes transcription of antiviral genes and inhibition of viral replication. Interacts with ECSIT; this interaction bridges IFIH1 to the MAVS complex at the mitochondrion. Post-translationally, during apoptosis, processed into 3 cleavage products. The helicase-containing fragment, once liberated from the CARD domains, translocate from the cytoplasm to the nucleus. The processed protein significantly sensitizes cells to DNA degradation. Sumoylated. Sumoylation positively regulates its role in type I interferon induction and is enhanced by PIAS2-beta. In terms of processing, ubiquitinated by RNF125, leading to its degradation by the proteasome. USP17/UPS17L2-dependent deubiquitination positively regulates the receptor. Ubiquitinated by TRIM25 via 'Lys-63'-linked ubiquitination, promoting activation of IFIH1/MDA5. Ubiquitinated by TRIM40 via 'Lys-48'-linked ubiquitination; leading to proteasomal degradation. Ubiquitinated by TRIM65 via 'Lys-63'-linked ubiquitination, promoting activation of IFIH1/MDA5. Post-translationally, ISGylated by ISG15. ISGylation increases upon infection with viruses. ISGylation at Lys-23 and Lys-43 is dependent of dephosphorylation, regulates mitochondrial translocation and oligomerization. Essential for IFIH1/MDA5-mediated cytokine responses and restriction of virus replication. Phosphorylated. Dephosphorylated by phsophatases PP1; dephosphorylation precedes and is required for ISGylation. As to expression, expression is prominent in lung, liver, kidney, heart and spleen (at protein level). Widely expressed at low level.

The protein localises to the cytoplasm. It localises to the nucleus. The protein resides in the mitochondrion. It catalyses the reaction ATP + H2O = ADP + phosphate + H(+). In terms of biological role, innate immune receptor which acts as a cytoplasmic sensor of viral nucleic acids and plays a major role in sensing viral infection and in the activation of a cascade of antiviral responses including the induction of type I interferons and pro-inflammatory cytokines. Its ligands include mRNA lacking 2'-O-methylation at their 5' cap and long-dsRNA (&gt;1 kb in length). Upon ligand binding it associates with mitochondria antiviral signaling protein (MAVS/IPS1) which activates the IKK-related kinases: TBK1 and IKBKE which phosphorylate interferon regulatory factors: IRF3 and IRF7 which in turn activate transcription of antiviral immunological genes, including interferons (IFNs); IFN-alpha and IFN-beta. Responsible for detecting the Picornaviridae family members such as encephalomyocarditis virus (EMCV), mengo encephalomyocarditis virus (ENMG), and theiler's murine encephalomyelitis virus (TMEV). Can also detect other viruses such as dengue virus (DENV), west Nile virus (WNV), and reovirus. Also involved in antiviral signaling in response to viruses containing a dsDNA genome, such as vaccinia virus. Plays an important role in amplifying innate immune signaling through recognition of RNA metabolites that are produced during virus infection by ribonuclease L (RNase L). May play an important role in enhancing natural killer cell function and may be involved in growth inhibition and apoptosis in several tumor cell lines. This is Interferon-induced helicase C domain-containing protein 1 from Mus musculus (Mouse).